We begin with the raw amino-acid sequence, 229 residues long: Uracil-DNA glycosylase (229 aa).

Catalysis depends on D64, which acts as the Proton acceptor.

Belongs to the uracil-DNA glycosylase (UDG) superfamily. UNG family.

Its subcellular location is the cytoplasm. The catalysed reaction is Hydrolyzes single-stranded DNA or mismatched double-stranded DNA and polynucleotides, releasing free uracil.. Its function is as follows. Excises uracil residues from the DNA which can arise as a result of misincorporation of dUMP residues by DNA polymerase or due to deamination of cytosine. The polypeptide is Uracil-DNA glycosylase (Geobacillus thermodenitrificans (strain NG80-2)).